Here is a 180-residue protein sequence, read N- to C-terminus: Large ribosomal subunit protein uL6 (180 aa).

It belongs to the universal ribosomal protein uL6 family. As to quaternary structure, part of the 50S ribosomal subunit.

In terms of biological role, this protein binds to the 23S rRNA, and is important in its secondary structure. It is located near the subunit interface in the base of the L7/L12 stalk, and near the tRNA binding site of the peptidyltransferase center. The polypeptide is Large ribosomal subunit protein uL6 (Cutibacterium acnes (strain DSM 16379 / KPA171202) (Propionibacterium acnes)).